We begin with the raw amino-acid sequence, 88 residues long: uncharacterized protein (88 aa).

This is an uncharacterized protein from Sulfolobus islandicus filamentous virus (isolate Iceland/Hveragerdi) (SIFV).